The sequence spans 411 residues: Corticotropin-releasing factor receptor 2 (411 aa).

The not cleaved signal peptide spans 1 to 19 (MDAALLHSLLEANCSLALA). At 1 to 108 (MDAALLHSLL…EPILDDKQRK (108 aa)) the chain is on the extracellular side. Residues Asn13, Asn41, Asn74, Asn86, and Asn94 are each glycosylated (N-linked (GlcNAc...) asparagine). 4 disulfides stabilise this stretch: Cys14-Cys50, Cys40-Cys83, Trp51-Arg77, and Cys64-Cys98. A helical membrane pass occupies residues 109–139 (YDLHYRIALVVNYLGHCVSVAALVAAFLLFL). Topologically, residues 140 to 146 (ALRSIRC) are cytoplasmic. A helical transmembrane segment spans residues 147–171 (LRNVIHWNLITTFILRNVMWFLLQL). Topologically, residues 172–185 (VDHEVHESNEVWCR) are extracellular. Cys184 and Cys254 are oxidised to a cystine. Residues 186–214 (CITTIFNYFVVTNFFWMFVEGCYLHTAIV) traverse the membrane as a helical segment. The Cytoplasmic segment spans residues 215–221 (MTYSTER). A helical membrane pass occupies residues 222–249 (LRKCLFLFIGWCIPFPIIVAWAIGKLYY). At 250-265 (ENEQCWFGKEPGDLVD) the chain is on the extracellular side. The helical transmembrane segment at 266-291 (YIYQGPIILVLLINFVFLFNIVRILM) threads the bilayer. Residues 292 to 302 (TKLRASTTSET) are Cytoplasmic-facing. The helical transmembrane segment at 303-327 (IQYRKAVKATLVLLPLLGITYMLFF) threads the bilayer. Residues 328–334 (VNPGEDD) lie on the Extracellular side of the membrane. The helical transmembrane segment at 335 to 364 (LSQIMFIYFNSFLQSFQGFFVSVFYCFFNG) threads the bilayer. Residues 365-411 (EVRSAVRKRWHRWQDHHSLRVPMARAMSIPTSPTRISFHSIKQTAAV) are Cytoplasmic-facing.

The protein belongs to the G-protein coupled receptor 2 family. Monomer. Interacts (via N-terminal extracellular domain) with CRF, UCN, UCN2 and UCN3. Has highest affinity for UCN, and considerably lower affinity for CRF, UNC2 and UCN3. An N-glycosylation site within the signal peptide impedes its proper cleavage and function.

It localises to the cell membrane. In terms of biological role, G-protein coupled receptor for CRH (corticotropin-releasing factor), UCN (urocortin), UCN2 and UCN3. Has high affinity for UCN. Ligand binding causes a conformation change that triggers signaling via guanine nucleotide-binding proteins (G proteins) and down-stream effectors, such as adenylate cyclase. Promotes the activation of adenylate cyclase, leading to increased intracellular cAMP levels. This is Corticotropin-releasing factor receptor 2 (CRHR2) from Homo sapiens (Human).